We begin with the raw amino-acid sequence, 285 residues long: 2-hydroxy-6-oxononadienedioate/2-hydroxy-6-oxononatrienedioate hydrolase 1 (285 aa).

The active-site Proton acceptor is the His265.

It belongs to the AB hydrolase superfamily. MhpC family. Homodimer.

It carries out the reaction (2Z,4E)-2-hydroxy-6-oxonona-2,4-dienedioate + H2O = (2Z)-2-hydroxypenta-2,4-dienoate + succinate + H(+). It catalyses the reaction (2Z,4E,7E)-2-hydroxy-6-oxonona-2,4,7-trienedioate + H2O = (2Z)-2-hydroxypenta-2,4-dienoate + fumarate + H(+). Its pathway is aromatic compound metabolism; 3-phenylpropanoate degradation. Catalyzes the cleavage of the C5-C6 bond of 2-hydroxy-6-oxononadienedioate and 2-hydroxy-6-oxononatrienedioate, a dienol ring fission product of the bacterial meta-cleavage pathway for degradation of phenylpropionic acid. The sequence is that of 2-hydroxy-6-oxononadienedioate/2-hydroxy-6-oxononatrienedioate hydrolase 1 from Pseudomonas putida (Arthrobacter siderocapsulatus).